A 306-amino-acid polypeptide reads, in one-letter code: MDIYSAATLLAEFVLGIIIFPKFIDYMKKLKLGQYIRQEGPDLHNYKEGTPTAGGIVFISLTVIAGLILKLPKELIFTLLFYGFIGFLDDFVSIVKKRSLGLRAWQKLALQFLFSIWIAYTILQYRTSSIFGITVPSWLFYLFTMLLVSGYSNATNLTDGIDGLAGWVFVTSMIPFMFFSKSSMEYKAIFVIIMPLLSFLVYNTRPAKVFMGDTGSLALGAYISTYALMTNNELSLLFFTPIFLLETISVILQVSSYKLRGKRLFKMAPIHHHFELLGWKEEKIVGVFSAWNLAIAIFYIAFFLNR.

10 consecutive transmembrane segments (helical) span residues 1-21 (MDIYSAATLLAEFVLGIIIFP), 49-69 (GTPTAGGIVFISLTVIAGLIL), 75-95 (LIFTLLFYGFIGFLDDFVSIV), 104-124 (AWQKLALQFLFSIWIAYTILQ), 130-150 (IFGITVPSWLFYLFTMLLVSG), 160-180 (GIDGLAGWVFVTSMIPFMFFS), 182-202 (SSMEYKAIFVIIMPLLSFLVY), 209-229 (VFMGDTGSLALGAYISTYALM), 234-254 (LSLLFFTPIFLLETISVILQV), and 284-304 (IVGVFSAWNLAIAIFYIAFFL).

It belongs to the glycosyltransferase 4 family. MraY subfamily. Requires Mg(2+) as cofactor.

The protein resides in the cell inner membrane. The enzyme catalyses UDP-N-acetyl-alpha-D-muramoyl-L-alanyl-gamma-D-glutamyl-meso-2,6-diaminopimeloyl-D-alanyl-D-alanine + di-trans,octa-cis-undecaprenyl phosphate = di-trans,octa-cis-undecaprenyl diphospho-N-acetyl-alpha-D-muramoyl-L-alanyl-D-glutamyl-meso-2,6-diaminopimeloyl-D-alanyl-D-alanine + UMP. The protein operates within cell wall biogenesis; peptidoglycan biosynthesis. Catalyzes the initial step of the lipid cycle reactions in the biosynthesis of the cell wall peptidoglycan: transfers peptidoglycan precursor phospho-MurNAc-pentapeptide from UDP-MurNAc-pentapeptide onto the lipid carrier undecaprenyl phosphate, yielding undecaprenyl-pyrophosphoryl-MurNAc-pentapeptide, known as lipid I. This is Phospho-N-acetylmuramoyl-pentapeptide-transferase from Fervidobacterium nodosum (strain ATCC 35602 / DSM 5306 / Rt17-B1).